We begin with the raw amino-acid sequence, 109 residues long: MAGSSSLLRAGIRNVLLMQMRRSSDQLGELGKGAGKGGGGGGSVREAGGAFGKRQAAEEERYFRQKEQEQIASLRKHHEEEIRHHKGEIERLQKEIERHKSKIKKLNDD.

Residues 1 to 22 (MAGSSSLLRAGIRNVLLMQMRR) constitute a mitochondrion transit peptide. An N-terminal inhibitory region region spans residues 27 to 56 (LGELGKGAGKGGGGGGSVREAGGAFGKRQA). Positions 27-109 (LGELGKGAGK…KSKIKKLNDD (83 aa)) are disordered. Residues 30-43 (LGKGAGKGGGGGGS) show a composition bias toward gly residues. 2 stretches are compositionally biased toward basic and acidic residues: residues 55–69 (QAAEEERYFRQKEQE) and 77–98 (HHEEEIRHHKGEIERLQKEIER). Residues 71-109 (IASLRKHHEEEIRHHKGEIERLQKEIERHKSKIKKLNDD) adopt a coiled-coil conformation. The tract at residues 78-109 (HEEEIRHHKGEIERLQKEIERHKSKIKKLNDD) is antiparallel alpha-helical coiled coil region. Residues 99 to 109 (HKSKIKKLNDD) show a composition bias toward basic residues.

The protein belongs to the ATPase inhibitor family. Homodimer; represents the active form and is present at a pH value below 6.5. Homotetramer; represents the inactive form and is present at a pH value above 7.0.

Its subcellular location is the mitochondrion. In terms of biological role, endogenous F(1)F(o)-ATPase inhibitor limiting ATP depletion when the mitochondrial membrane potential falls below a threshold and the F(1)F(o)-ATP synthase starts hydrolyzing ATP to pump protons out of the mitochondrial matrix. Required to avoid the consumption of cellular ATP when the F(1)F(o)-ATP synthase enzyme acts as an ATP hydrolase. Indirectly acts as a regulator of heme synthesis in erythroid tissues: regulates heme synthesis by modulating the mitochondrial pH and redox potential, allowing fech to efficiently catalyze the incorporation of iron into protoporphyrin IX to produce heme. The protein is ATPase inhibitor, mitochondrial of Xenopus tropicalis (Western clawed frog).